We begin with the raw amino-acid sequence, 373 residues long: Transaldolase (373 aa).

Lys-143 (schiff-base intermediate with substrate) is an active-site residue.

The protein belongs to the transaldolase family. Type 2 subfamily.

It localises to the cytoplasm. The enzyme catalyses D-sedoheptulose 7-phosphate + D-glyceraldehyde 3-phosphate = D-erythrose 4-phosphate + beta-D-fructose 6-phosphate. The protein operates within carbohydrate degradation; pentose phosphate pathway; D-glyceraldehyde 3-phosphate and beta-D-fructose 6-phosphate from D-ribose 5-phosphate and D-xylulose 5-phosphate (non-oxidative stage): step 2/3. Transaldolase is important for the balance of metabolites in the pentose-phosphate pathway. This chain is Transaldolase, found in Mycobacterium ulcerans (strain Agy99).